The sequence spans 179 residues: Translation initiation factor IF-3 (179 aa).

The protein belongs to the IF-3 family. In terms of assembly, monomer.

It localises to the cytoplasm. In terms of biological role, IF-3 binds to the 30S ribosomal subunit and shifts the equilibrium between 70S ribosomes and their 50S and 30S subunits in favor of the free subunits, thus enhancing the availability of 30S subunits on which protein synthesis initiation begins. This is Translation initiation factor IF-3 from Buchnera aphidicola subsp. Acyrthosiphon pisum (strain APS) (Acyrthosiphon pisum symbiotic bacterium).